The following is a 185-amino-acid chain: Ribonuclease HII (185 aa).

An RNase H type-2 domain is found at Met-1–Leu-185. A divalent metal cation is bound by residues Asp-7, Glu-8, and Asp-99.

This sequence belongs to the RNase HII family. Requires Mn(2+) as cofactor. The cofactor is Mg(2+).

It localises to the cytoplasm. It carries out the reaction Endonucleolytic cleavage to 5'-phosphomonoester.. In terms of biological role, endonuclease that specifically degrades the RNA of RNA-DNA hybrids. This Francisella philomiragia subsp. philomiragia (strain ATCC 25017 / CCUG 19701 / FSC 153 / O#319-036) protein is Ribonuclease HII.